A 124-amino-acid polypeptide reads, in one-letter code: Ribonuclease pancreatic (124 aa).

The span at Lys-1–Met-13 shows a compositional bias: basic and acidic residues. Positions Lys-1–Asn-24 are disordered. The substrate site is built by Lys-7 and Arg-10. The active-site Proton acceptor is His-12. Disulfide bonds link Cys-26–Cys-84, Cys-40–Cys-95, Cys-58–Cys-110, and Cys-65–Cys-72. Substrate is bound by residues Lys-41–Thr-45, Lys-66, and Arg-85. The active-site Proton donor is His-119.

It belongs to the pancreatic ribonuclease family. In terms of assembly, monomer. Interacts with and forms tight 1:1 complexes with RNH1. Dimerization of two such complexes may occur. Interaction with RNH1 inhibits this protein. Pancreas.

The protein localises to the secreted. It catalyses the reaction an [RNA] containing cytidine + H2O = an [RNA]-3'-cytidine-3'-phosphate + a 5'-hydroxy-ribonucleotide-3'-[RNA].. The catalysed reaction is an [RNA] containing uridine + H2O = an [RNA]-3'-uridine-3'-phosphate + a 5'-hydroxy-ribonucleotide-3'-[RNA].. Functionally, endonuclease that catalyzes the cleavage of RNA on the 3' side of pyrimidine nucleotides. Acts on single-stranded and double-stranded RNA. The sequence is that of Ribonuclease pancreatic (RNASE1) from Connochaetes taurinus (Blue wildebeest).